A 279-amino-acid chain; its full sequence is Undecaprenyl-diphosphatase (279 aa).

Transmembrane regions (helical) follow at residues 2 to 22 (LIIELLKAIFFGIIEGITEWL), 44 to 64 (AFIEMFNIVIQLGAIIAVMLI), 85 to 105 (WQLWLKVVIACIPSILIAVPL), 113 to 133 (FYFMVPIAIALIVYGIAFIWI), 163 to 183 (VLSIVPGTSRSGATILGAIIL), 188 to 208 (TVAADFTFFLAIPTMFGYSGL), 223 to 243 (AQVLILLVASLTAFVVSLLAI), and 255 to 275 (FTIFGKYRIVLGSLLLIYSFF).

Belongs to the UppP family.

It localises to the cell membrane. It catalyses the reaction di-trans,octa-cis-undecaprenyl diphosphate + H2O = di-trans,octa-cis-undecaprenyl phosphate + phosphate + H(+). Its function is as follows. Catalyzes the dephosphorylation of undecaprenyl diphosphate (UPP). Confers resistance to bacitracin. This Streptococcus pyogenes serotype M28 (strain MGAS6180) protein is Undecaprenyl-diphosphatase.